Reading from the N-terminus, the 254-residue chain is E3 ubiquitin-protein ligase NEURL3 (254 aa).

In terms of domain architecture, NHR spans 17 to 174 (ALSFHGDATG…TTKAIELLDP (158 aa)). The RING-type zinc-finger motif lies at 197 to 236 (CVICFHNTANTRLMPCGHSQFCGSCAWHIFKDTARCPMCR).

Its subcellular location is the cytoplasm. It catalyses the reaction S-ubiquitinyl-[E2 ubiquitin-conjugating enzyme]-L-cysteine + [acceptor protein]-L-lysine = [E2 ubiquitin-conjugating enzyme]-L-cysteine + N(6)-ubiquitinyl-[acceptor protein]-L-lysine.. It functions in the pathway protein modification; protein ubiquitination. Its function is as follows. E3 ubiquitin-protein ligase that plays a role in various biological processes such as lung development or innate immunity. Seems to utilize UBE2E1. Promotes innate antiviral response by catalyzing 'Lys-63'-linked ubiquitination of IRF7. Also inhibits hepatitis C virus assembly by directly binding to viral E1 envelope glycoprotein to disrupt its interaction with E2. Plays an essential role in TLR4-mediated activation of MAPK pathways by promoting 'Lys-48'-linked polyubiquitination of the phosphatase DUSP1/MKP1. The sequence is that of E3 ubiquitin-protein ligase NEURL3 (Neurl3) from Rattus norvegicus (Rat).